The primary structure comprises 155 residues: Ribosomal RNA large subunit methyltransferase H (155 aa).

Residues leucine 72, glycine 103, and 122–127 (LSALTL) each bind S-adenosyl-L-methionine.

This sequence belongs to the RNA methyltransferase RlmH family. In terms of assembly, homodimer.

It localises to the cytoplasm. The enzyme catalyses pseudouridine(1915) in 23S rRNA + S-adenosyl-L-methionine = N(3)-methylpseudouridine(1915) in 23S rRNA + S-adenosyl-L-homocysteine + H(+). In terms of biological role, specifically methylates the pseudouridine at position 1915 (m3Psi1915) in 23S rRNA. This is Ribosomal RNA large subunit methyltransferase H from Citrobacter koseri (strain ATCC BAA-895 / CDC 4225-83 / SGSC4696).